We begin with the raw amino-acid sequence, 111 residues long: Probable 4-amino-4-deoxy-L-arabinose-phosphoundecaprenol flippase subunit ArnE (111 aa).

Helical transmembrane passes span 36-56 (IVLW…LWLL), 61-81 (VPVG…TLAA), and 88-108 (PVSP…VILG). One can recognise an EamA domain in the interval 40 to 109 (LGLALACIGL…IIGGIVILGS (70 aa)).

This sequence belongs to the ArnE family. In terms of assembly, heterodimer of ArnE and ArnF.

It localises to the cell inner membrane. It functions in the pathway bacterial outer membrane biogenesis; lipopolysaccharide biosynthesis. In terms of biological role, translocates 4-amino-4-deoxy-L-arabinose-phosphoundecaprenol (alpha-L-Ara4N-phosphoundecaprenol) from the cytoplasmic to the periplasmic side of the inner membrane. The chain is Probable 4-amino-4-deoxy-L-arabinose-phosphoundecaprenol flippase subunit ArnE from Shigella flexneri serotype 5b (strain 8401).